A 115-amino-acid chain; its full sequence is Double-headed protease inhibitor, submandibular gland (115 aa).

Kazal-like domains are found at residues 6 to 66 (IGRE…ACDI) and 67 to 115 (ECTE…HGEC). Cystine bridges form between C12–C46, C24–C43, C32–C64, C68–C97, C75–C94, and C83–C115.

It is found in the secreted. In terms of biological role, this inhibitor is composed of two homologous actively inhibiting halves: one which inhibits trypsin, the other which inhibits elastase. The polypeptide is Double-headed protease inhibitor, submandibular gland (Vulpes vulpes (Red fox)).